A 1087-amino-acid polypeptide reads, in one-letter code: Formin-H (1087 aa).

A compositionally biased stretch (polar residues) spans Met1–Leu23. The segment at Met1–Ser25 is disordered. The GBD/FH3 domain maps to Val34 to Pro394. 2 stretches are compositionally biased toward low complexity: residues Phe416–Lys436 and Ser549–Pro558. Disordered stretches follow at residues Phe416–Glu445, Ser549–Pro625, and Val1048–Lys1087. A coiled-coil region spans residues Ser433–Ser461. The segment covering Phe569–Glu588 has biased composition (polar residues). In terms of domain architecture, FH1 spans Pro589–Pro615. A compositionally biased stretch (pro residues) spans Gly592–Gly616. Residues Ala623 to Lys1016 form the FH2 domain. One can recognise a DAD domain in the interval Asp1013 to Leu1051.

Belongs to the formin homology family. Diaphanous subfamily. In terms of assembly, interacts with vasP, proB/profilin-2 and rac1A. Interacts (via GBD/FH3 domain) with activated Rho-GTPases.

The protein localises to the cytoplasm. It localises to the cell cortex. Its subcellular location is the cytoskeleton. Formins play an important role in the nucleation of actin and the formation of linear actin filaments. Important for cell migration and formation, elongation and maintenance of filopodia. Specifically controls filopodial dynamics by regulating actin turnover at the barbed ends of actin filaments. The polypeptide is Formin-H (forH) (Dictyostelium discoideum (Social amoeba)).